The primary structure comprises 367 residues: 2-aminoethylphosphonate--pyruvate transaminase (367 aa).

An N6-(pyridoxal phosphate)lysine modification is found at Lys-194.

This sequence belongs to the class-V pyridoxal-phosphate-dependent aminotransferase family. PhnW subfamily. In terms of assembly, homodimer. The cofactor is pyridoxal 5'-phosphate.

The catalysed reaction is (2-aminoethyl)phosphonate + pyruvate = phosphonoacetaldehyde + L-alanine. Involved in phosphonate degradation. This chain is 2-aminoethylphosphonate--pyruvate transaminase, found in Salmonella gallinarum (strain 287/91 / NCTC 13346).